Reading from the N-terminus, the 332-residue chain is Putative ankyrin repeat protein R896 (332 aa).

5 ANK repeats span residues 159–188, 190–218, 219–248, 249–278, and 280–308; these read GNDN…NVKS, DNCA…NVKA, DGNY…DIKA, AQNL…NIST, and NDYV…DIFS.

This Acanthamoeba polyphaga mimivirus (APMV) protein is Putative ankyrin repeat protein R896.